The primary structure comprises 450 residues: MARKYFGTDGIRGKANIFPMTPDFAMKVGIAVGVLFRSKATSRRVVIGKDTRLSCYMLENALVAGFTAAGMDAFLLGPIPTPAVAMLCRSLRADIGVMISASHNAFYDNGIKLFGPDGFKLSDEKETKIEALLDSDISELPLANCEEIGRAKRVEGDIYRYIEYAKRTLPRDVRLDALRIVVDCANGATYKAAPRALWELGAEVIAINDEPNGFNINQECGSTDLTSLRNKVHEVRADVGIALDGDGDRVLMVDEKGQMIDGDQLIAVIAEHWHKTGRLHHKGIVTTVMSNLGLERFLSEKGLKLIRTDVGDRYVVDMMRQKKYNIGGESSGHIILSDFCTTGDGLVAALQVLACMKESQQPMSQLCKRFEPVPQILKNKVVHNKNVLQKSEVQAALTKASEHLGKEGRLLVRASGTEPVIRVMAEGDDRKAMTAIVDDLITLIARHDHD.

Residue serine 102 is the Phosphoserine intermediate of the active site. Mg(2+)-binding residues include serine 102, aspartate 244, aspartate 246, and aspartate 248. Serine 102 carries the phosphoserine modification.

Belongs to the phosphohexose mutase family. It depends on Mg(2+) as a cofactor. Activated by phosphorylation.

The enzyme catalyses alpha-D-glucosamine 1-phosphate = D-glucosamine 6-phosphate. In terms of biological role, catalyzes the conversion of glucosamine-6-phosphate to glucosamine-1-phosphate. This is Phosphoglucosamine mutase from Bartonella bacilliformis (strain ATCC 35685 / KC583 / Herrer 020/F12,63).